The primary structure comprises 440 residues: Probable exopolygalacturonase C (440 aa).

The first 21 residues, 1 to 21, serve as a signal peptide directing secretion; the sequence is MLITNPALLGILASLAPLALG. Residues Asn24, Asn84, Asn151, and Asn219 are each glycosylated (N-linked (GlcNAc...) asparagine). 2 PbH1 repeats span residues 217–238 and 240–261; these read GTNI…AVNT and SHNI…SIGS. Asp231 (proton donor) is an active-site residue. Residue His255 is part of the active site. An N-linked (GlcNAc...) asparagine glycan is attached at Asn271. The stretch at 272–293 is one PbH1 3 repeat; that stretch reads ITNLRFEDVTVIDALYAARFKS. N-linked (GlcNAc...) asparagine glycans are attached at residues Asn313 and Asn350. Cysteines 389 and 395 form a disulfide. The N-linked (GlcNAc...) asparagine glycan is linked to Asn434.

This sequence belongs to the glycosyl hydrolase 28 family.

The protein resides in the secreted. It catalyses the reaction [(1-&gt;4)-alpha-D-galacturonosyl](n) + H2O = alpha-D-galacturonate + [(1-&gt;4)-alpha-D-galacturonosyl](n-1). Its function is as follows. Specific in hydrolyzing the terminal glycosidic bond of polygalacturonic acid and oligogalacturonates. The sequence is that of Probable exopolygalacturonase C (pgxC) from Neosartorya fischeri (strain ATCC 1020 / DSM 3700 / CBS 544.65 / FGSC A1164 / JCM 1740 / NRRL 181 / WB 181) (Aspergillus fischerianus).